The sequence spans 603 residues: Elongation factor 4 (603 aa).

The region spanning 7–189 is the tr-type G domain; that stretch reads SRLRNFCIIA…AVVDRIPSPK (183 aa). GTP contacts are provided by residues 19 to 24 and 136 to 139; these read DHGKST and NKVD.

This sequence belongs to the TRAFAC class translation factor GTPase superfamily. Classic translation factor GTPase family. LepA subfamily.

The protein resides in the cell inner membrane. It carries out the reaction GTP + H2O = GDP + phosphate + H(+). Required for accurate and efficient protein synthesis under certain stress conditions. May act as a fidelity factor of the translation reaction, by catalyzing a one-codon backward translocation of tRNAs on improperly translocated ribosomes. Back-translocation proceeds from a post-translocation (POST) complex to a pre-translocation (PRE) complex, thus giving elongation factor G a second chance to translocate the tRNAs correctly. Binds to ribosomes in a GTP-dependent manner. The protein is Elongation factor 4 of Prochlorococcus marinus (strain NATL2A).